A 218-amino-acid polypeptide reads, in one-letter code: Adenylate kinase (218 aa).

Glycine 10–threonine 15 contributes to the ATP binding site. Residues serine 30 to valine 59 are NMP. Residues threonine 31, arginine 36, glycine 57 to valine 59, glycine 85 to arginine 88, and glutamine 92 contribute to the AMP site. The segment at glutamate 122–aspartate 159 is LID. ATP-binding positions include arginine 123 and serine 132 to tyrosine 133. Residues arginine 156 and arginine 167 each contribute to the AMP site. Position 203 (glycine 203) interacts with ATP.

This sequence belongs to the adenylate kinase family. As to quaternary structure, monomer.

It localises to the cytoplasm. The catalysed reaction is AMP + ATP = 2 ADP. It functions in the pathway purine metabolism; AMP biosynthesis via salvage pathway; AMP from ADP: step 1/1. Catalyzes the reversible transfer of the terminal phosphate group between ATP and AMP. Plays an important role in cellular energy homeostasis and in adenine nucleotide metabolism. The protein is Adenylate kinase of Bordetella pertussis (strain Tohama I / ATCC BAA-589 / NCTC 13251).